Reading from the N-terminus, the 432-residue chain is UDP-glucose 6-dehydrogenase (432 aa).

NAD(+) is bound by residues 2 to 19 (NITF…GIIM), valine 11, aspartate 30, lysine 35, threonine 121, and glutamate 152. Substrate-binding positions include 148–152 (EFLRE), lysine 202, asparagine 206, 247–251 (FLNAG), and glycine 255. The Nucleophile role is filled by cysteine 258. Position 261 (lysine 261) interacts with NAD(+). A substrate-binding site is contributed by lysine 319. Residue arginine 326 coordinates NAD(+).

Belongs to the UDP-glucose/GDP-mannose dehydrogenase family.

It catalyses the reaction UDP-alpha-D-glucose + 2 NAD(+) + H2O = UDP-alpha-D-glucuronate + 2 NADH + 3 H(+). Its pathway is nucleotide-sugar biosynthesis; UDP-alpha-D-glucuronate biosynthesis; UDP-alpha-D-glucuronate from UDP-alpha-D-glucose: step 1/1. This Rickettsia conorii (strain ATCC VR-613 / Malish 7) protein is UDP-glucose 6-dehydrogenase (udg).